The chain runs to 78 residues: Defensin beta 136 (78 aa).

The signal sequence occupies residues methionine 1 to glycine 21. Cystine bridges form between cysteine 33–cysteine 60, cysteine 40–cysteine 54, and cysteine 44–cysteine 61.

Belongs to the beta-defensin family.

It localises to the secreted. In terms of biological role, host defense peptide that exhibits antimicrobial and antifungal activity. Exhibits antimicrobial activity against E.coli, S.aureus and C.albicans (in vitro). Has high lipopolysaccharide (LPS)-binding affinity, and may thereby be involved in immunoregulation through LPS neutralization. This chain is Defensin beta 136 (DEFB136), found in Pan troglodytes (Chimpanzee).